Here is a 612-residue protein sequence, read N- to C-terminus: Dihydroxy-acid dehydratase (612 aa).

Aspartate 81 is a binding site for Mg(2+). Cysteine 122 provides a ligand contact to [2Fe-2S] cluster. 2 residues coordinate Mg(2+): aspartate 123 and lysine 124. Lysine 124 is modified (N6-carboxylysine). Position 193 (cysteine 193) interacts with [2Fe-2S] cluster. Glutamate 489 provides a ligand contact to Mg(2+). Residue serine 515 is the Proton acceptor of the active site.

Belongs to the IlvD/Edd family. Homodimer. It depends on [2Fe-2S] cluster as a cofactor. Mg(2+) is required as a cofactor.

It carries out the reaction (2R)-2,3-dihydroxy-3-methylbutanoate = 3-methyl-2-oxobutanoate + H2O. The catalysed reaction is (2R,3R)-2,3-dihydroxy-3-methylpentanoate = (S)-3-methyl-2-oxopentanoate + H2O. It functions in the pathway amino-acid biosynthesis; L-isoleucine biosynthesis; L-isoleucine from 2-oxobutanoate: step 3/4. It participates in amino-acid biosynthesis; L-valine biosynthesis; L-valine from pyruvate: step 3/4. Functionally, functions in the biosynthesis of branched-chain amino acids. Catalyzes the dehydration of (2R,3R)-2,3-dihydroxy-3-methylpentanoate (2,3-dihydroxy-3-methylvalerate) into 2-oxo-3-methylpentanoate (2-oxo-3-methylvalerate) and of (2R)-2,3-dihydroxy-3-methylbutanoate (2,3-dihydroxyisovalerate) into 2-oxo-3-methylbutanoate (2-oxoisovalerate), the penultimate precursor to L-isoleucine and L-valine, respectively. The sequence is that of Dihydroxy-acid dehydratase from Xanthomonas campestris pv. campestris (strain 8004).